We begin with the raw amino-acid sequence, 428 residues long: Serine--tRNA ligase (428 aa).

L-serine is bound at residue 235 to 237 (TAE). 266 to 268 (RSE) serves as a coordination point for ATP. Glu-289 is a binding site for L-serine. ATP is bound at residue 353–356 (EISS). Ser-389 serves as a coordination point for L-serine.

The protein belongs to the class-II aminoacyl-tRNA synthetase family. Type-1 seryl-tRNA synthetase subfamily. Homodimer. The tRNA molecule binds across the dimer.

It localises to the cytoplasm. It catalyses the reaction tRNA(Ser) + L-serine + ATP = L-seryl-tRNA(Ser) + AMP + diphosphate + H(+). The catalysed reaction is tRNA(Sec) + L-serine + ATP = L-seryl-tRNA(Sec) + AMP + diphosphate + H(+). It participates in aminoacyl-tRNA biosynthesis; selenocysteinyl-tRNA(Sec) biosynthesis; L-seryl-tRNA(Sec) from L-serine and tRNA(Sec): step 1/1. Catalyzes the attachment of serine to tRNA(Ser). Is also able to aminoacylate tRNA(Sec) with serine, to form the misacylated tRNA L-seryl-tRNA(Sec), which will be further converted into selenocysteinyl-tRNA(Sec). The polypeptide is Serine--tRNA ligase (Shewanella pealeana (strain ATCC 700345 / ANG-SQ1)).